Here is a 596-residue protein sequence, read N- to C-terminus: MLRTHDLGSLRSEHIGQTVTLAGWVGRRRDHGGVAFVDLRDASGVSQVVVREEEVFHGLRNEYVLQVIGTVSQRPEGNENPALATGQIEVIAEKVTILNTSDPLPFQIDEHVEVGEEARLKHRYLDLRRPGPARNMRLRSEANRVARELLHRDGYVEIETPTLTRSTPEGARDFVVPARLAPGSWYALPQSPQLFKQLLQVGGFEKYYQIARCYRDEDFRADRQPEFTQLDIEASFVEQDDIISLGESIVKALWQLIDVEIPTPIQRITYADAMARYGSDKPDLRFGLELTELTEFFKDTNFGVFKAPYVGAVVMPGGASQARRALDAWQEWAKQRGAKGLAYVLFKEDGELAGPVAKNLTDTERAGLADAVGAKPGDCIFFAAGEKTPSRALLGAARVEIGHRTGLINPADWAFCWVVDAPMFEPAAAAVASGDVAVGAGQWTAVHHAFTSPKPEFMDSFDKDPESALSYAYDIVCNGNEIGGGSIRIHERDVQERVFELMGLDKADAETKFGFLLEGFKFGAPPHGGIAFGWDRVVALLAGVESIRDVIAFPKSGGGYDPLTQAPAPITAQQRKEAGVDFKPEAKKADPGATKA.

Glu169 contributes to the L-aspartate binding site. Positions 193–196 (QLFK) are aspartate. Arg215 lines the L-aspartate pocket. Residues 215 to 217 (RDE) and Gln224 contribute to the ATP site. L-aspartate is bound at residue His447. Position 481 (Glu481) interacts with ATP. Arg488 is an L-aspartate binding site. Residue 533-536 (GWDR) participates in ATP binding. The disordered stretch occupies residues 559–596 (GYDPLTQAPAPITAQQRKEAGVDFKPEAKKADPGATKA). A compositionally biased stretch (basic and acidic residues) spans 574–590 (QRKEAGVDFKPEAKKAD).

The protein belongs to the class-II aminoacyl-tRNA synthetase family. Type 1 subfamily. In terms of assembly, homodimer.

It localises to the cytoplasm. It carries out the reaction tRNA(Asx) + L-aspartate + ATP = L-aspartyl-tRNA(Asx) + AMP + diphosphate. Aspartyl-tRNA synthetase with relaxed tRNA specificity since it is able to aspartylate not only its cognate tRNA(Asp) but also tRNA(Asn). Reaction proceeds in two steps: L-aspartate is first activated by ATP to form Asp-AMP and then transferred to the acceptor end of tRNA(Asp/Asn). In Arthrobacter sp. (strain FB24), this protein is Aspartate--tRNA(Asp/Asn) ligase.